We begin with the raw amino-acid sequence, 256 residues long: Putative ankyrin repeat protein PAE1861 (256 aa).

ANK repeat units lie at residues 1-30 (MDCNNLLNAARRGEAELLTRLLNEGCSPDV), 34-63 (YGRTPLYYAAERGDVGTVDLLIKAGADPNA), 67-92 (EGKTPIIIATQSRKFGVIPLLSASAV), 93-122 (GVEEALYTAARNGCHKAVRYMLARGVRPGA), 124-151 (HGESLLHLVAGDAGLVKLLLEYGVDPNA), 155-184 (HGKTPLHMASEHNCAQCVELLLKRGPDVNV), 188-214 (AGRTPLHYADDVDCIKLLLRYGADLNA), and 218-245 (MGRTPLHYAEDGLAAEALLKRGARPVPD).

The sequence is that of Putative ankyrin repeat protein PAE1861 from Pyrobaculum aerophilum (strain ATCC 51768 / DSM 7523 / JCM 9630 / CIP 104966 / NBRC 100827 / IM2).